A 547-amino-acid polypeptide reads, in one-letter code: Intercellular adhesion molecule 3 (547 aa).

A signal peptide spans 1–29; that stretch reads MATMVPSVLWPRACWTLLVCCLLTPGVQG. Over 30 to 485 the chain is Extracellular; sequence QEFLLRVEPQ…VMDIEAGSSH (456 aa). The region spanning 46–103 is the Ig-like C2-type 1 domain; that stretch reads GGSLFVNCSTDCPSSEKIALETSLSKELVASGMGWAAFNLSNVTGNSRILCSVYCNGS. Residues Asn52, Asn84, Asn87, Asn101, Asn110, and Asn134 are each glycosylated (N-linked (GlcNAc...) asparagine). Cystine bridges form between Cys53/Cys96 and Cys57/Cys100. Residues 132-197 form the Ig-like C2-type 2 domain; that stretch reads GQNFTLRCQV…FSCRTELDMQ (66 aa). An intrachain disulfide couples Cys139 to Cys190. N-linked (GlcNAc...) asparagine glycans are attached at residues Asn206, Asn264, Asn295, Asn308, Asn320, Asn363, Asn389, Asn453, and Asn457. The Ig-like C2-type 3 domain occupies 234–301; sequence ETSWPVDCTL…IVCNVTLGGE (68 aa). Cys241 and Cys294 are disulfide-bonded. In terms of domain architecture, Ig-like C2-type 4 spans 329-382; the sequence is GSTVTVSCMAGARVQVTLDGVPAAAPGQPAQLQLNATESDDRRSFFCSATLEVD. An intrachain disulfide couples Cys336 to Cys375. Positions 416–469 constitute an Ig-like C2-type 5 domain; the sequence is KTTHVLQCQARGNPYPELRCLKEGSSREVPVGIPFFVNVTHNGTYQCQASSSRG. Cys423 and Cys462 form a disulfide bridge. Residues 486-510 form a helical membrane-spanning segment; it reads FVPVFVAVLLTLGVVTIVLALMYVF. Over 511 to 547 the chain is Cytoplasmic; sequence REHKRSGSYHVREESTYLPLTSMQPTQAMGEEPSRAE.

This sequence belongs to the immunoglobulin superfamily. ICAM family. Interacts with moesin/MSN. Post-translationally, upon stimulation by a physiologic stimuli becomes rapidly and transiently phosphorylated on serine residues. In terms of tissue distribution, leukocytes.

The protein localises to the membrane. ICAM proteins are ligands for the leukocyte adhesion protein LFA-1 (integrin alpha-L/beta-2). ICAM3 is also a ligand for integrin alpha-D/beta-2. In association with integrin alpha-L/beta-2, contributes to apoptotic neutrophil phagocytosis by macrophages. The protein is Intercellular adhesion molecule 3 (ICAM3) of Pan troglodytes (Chimpanzee).